Reading from the N-terminus, the 199-residue chain is Recombination protein RecR (199 aa).

The C4-type zinc-finger motif lies at 57–72; it reads CSICGNITDEDPCAIC. The Toprim domain occupies 80-176; that stretch reads STILVVEQPK…KVTRLAHGLS (97 aa).

It belongs to the RecR family.

May play a role in DNA repair. It seems to be involved in an RecBC-independent recombinational process of DNA repair. It may act with RecF and RecO. In Lacticaseibacillus casei (strain BL23) (Lactobacillus casei), this protein is Recombination protein RecR.